The sequence spans 247 residues: tRNA (guanine-N(1)-)-methyltransferase (247 aa).

Residues G115 and 134–139 (IGDFVL) each bind S-adenosyl-L-methionine.

The protein belongs to the RNA methyltransferase TrmD family. In terms of assembly, homodimer.

The protein localises to the cytoplasm. The enzyme catalyses guanosine(37) in tRNA + S-adenosyl-L-methionine = N(1)-methylguanosine(37) in tRNA + S-adenosyl-L-homocysteine + H(+). In terms of biological role, specifically methylates guanosine-37 in various tRNAs. The polypeptide is tRNA (guanine-N(1)-)-methyltransferase (Anaeromyxobacter sp. (strain K)).